Here is a 507-residue protein sequence, read N- to C-terminus: Probable cytosol aminopeptidase (507 aa).

Residues Lys-271 and Asp-276 each coordinate Mn(2+). Lys-283 is an active-site residue. Mn(2+) contacts are provided by Asp-294, Asp-353, and Glu-355. Residue Arg-357 is part of the active site.

It belongs to the peptidase M17 family. The cofactor is Mn(2+).

It is found in the cytoplasm. The enzyme catalyses Release of an N-terminal amino acid, Xaa-|-Yaa-, in which Xaa is preferably Leu, but may be other amino acids including Pro although not Arg or Lys, and Yaa may be Pro. Amino acid amides and methyl esters are also readily hydrolyzed, but rates on arylamides are exceedingly low.. It carries out the reaction Release of an N-terminal amino acid, preferentially leucine, but not glutamic or aspartic acids.. In terms of biological role, presumably involved in the processing and regular turnover of intracellular proteins. Catalyzes the removal of unsubstituted N-terminal amino acids from various peptides. In Nitratidesulfovibrio vulgaris (strain ATCC 29579 / DSM 644 / CCUG 34227 / NCIMB 8303 / VKM B-1760 / Hildenborough) (Desulfovibrio vulgaris), this protein is Probable cytosol aminopeptidase.